Here is a 364-residue protein sequence, read N- to C-terminus: Probable UDP-arabinopyranose mutase 4 (364 aa).

The short motif at 106 to 108 is the DXD motif element; sequence DDD. R154 is a glycosylation site (N-linked (Glc...) arginine).

Belongs to the RGP family. In terms of assembly, heteromers with RGP1 and RGP2. Requires Mn(2+) as cofactor. Mg(2+) is required as a cofactor. In terms of processing, reversibly glycosylated in vitro by UDP-glucose, UDP-xylose and UDP-galactose, but not UDP-mannose. In terms of tissue distribution, specifically expressed in developing seeds.

It localises to the cytoplasm. Its subcellular location is the cytosol. The protein resides in the golgi apparatus. It catalyses the reaction UDP-beta-L-arabinofuranose = UDP-beta-L-arabinopyranose. In terms of biological role, probable UDP-L-arabinose mutase involved in the biosynthesis of cell wall non-cellulosic polysaccharides. This is Probable UDP-arabinopyranose mutase 4 from Arabidopsis thaliana (Mouse-ear cress).